A 503-amino-acid polypeptide reads, in one-letter code: Pre-glycoprotein polyprotein GP complex (503 aa).

Gly2 carries N-myristoyl glycine; by host lipidation. Over 2–17 (GQIVTLIQSIPEVLQE) the chain is Extracellular. Residues 18–33 (VFNVALIIVSVLCIVK) traverse the membrane as a helical segment. Over 34 to 58 (GFVNLMRCGLFQLVTFLILSGRSCD) the chain is Cytoplasmic. Zn(2+) is bound at residue Cys57. Residues 59-446 (SMMIDRRHNL…QGKTPLALTD (388 aa)) lie on the Extracellular side of the membrane. 4 disulfide bridges follow: Cys86/Cys248, Cys293/Cys306, Cys315/Cys324, and Cys378/Cys399. N-linked (GlcNAc...) asparagine; by host glycosylation is found at Asn89, Asn111, Asn181, and Asn241. N-linked (GlcNAc...) asparagine; by host glycans are attached at residues Asn379, Asn387, Asn404, and Asn409. Residues 447–467 (ICFWSLVFYTITVFLHIVGIP) form a helical membrane-spanning segment. Topologically, residues 468-503 (THRHIIGDGCPKPHRITRNSLCSCGYYKYQRNLTNG) are cytoplasmic. Residues His469, His471, Cys477, His481, Cys489, and Cys491 each contribute to the Zn(2+) site.

This sequence belongs to the arenaviridae GPC protein family. In terms of assembly, interacts with glycoprotein G2. Part of the GP complex (GP-C) together with glycoprotein G1 and glycoprotein G2. The GP-complex interacts with protein Z, which interacts with ribonucleocapsid; these interactions may induce virion budding. Homotrimer; disulfide-linked. In pre-fusion state, G1 homotrimers bind G2 homotrimers via ionic interactions. Part of the GP complex (GP-C) together with glycoprotein G2 and the stable signal peptide. The GP-complex interacts with protein Z, which interacts with ribonucleocapsid; these interactions may induce virion budding. As to quaternary structure, homotrimer. Interacts with the stable signal peptide. In pre-fusion state, G2 homotrimers bind G1 homotrimers via ionic interactions. Part of the GP complex (GP-C) together with glycoprotein G1 and the stable signal peptide. Acidification in the endosome triggers rearrangements, which ultimately leads to a 6 helix bundle formed by the two heptad repeat domains (HR1 and HR2) in post-fusion state. The GP-complex interacts with protein Z, which interacts with ribonucleocapsid; these interactions may induce virion budding. Specific enzymatic cleavages in vivo yield mature proteins. GP-C polyprotein is cleaved in the endoplasmic reticulum by the host protease MBTPS1. Only cleaved glycoprotein is incorporated into virions. In terms of processing, the SSP remains stably associated with the GP complex following cleavage by signal peptidase and plays crucial roles in the trafficking of GP through the secretory pathway. Post-translationally, myristoylation is necessary for GP2-mediated fusion activity.

Its subcellular location is the virion membrane. The protein resides in the host endoplasmic reticulum membrane. It is found in the host Golgi apparatus membrane. It localises to the host cell membrane. Functionally, functions as a cleaved signal peptide that is retained as the third component of the GP complex (GP-C). Helps to stabilize the spike complex in its native conformation. The SSP is required for efficient glycoprotein expression, post-translational maturation cleavage of G1 and G2, glycoprotein transport to the cell surface plasma membrane, formation of infectious virus particles, and acid pH-dependent glycoprotein-mediated cell fusion. In terms of biological role, forms the virion spikes together with glycoprotein G2. The glycoprotein spike trimers are connected to the underlying matrix. Interacts with the host receptor leading to virus endocytosis. Its function is as follows. Forms the virion spikes together with glycoprotein G1. The glycoprotein spike trimers are connected to the underlying matrix. Class I viral fusion protein that directs fusion of viral and host endosomal membranes, leading to delivery of the nucleocapsid into the cytoplasm. Membrane fusion is mediated by irreversible conformational changes induced by acidification. This chain is Pre-glycoprotein polyprotein GP complex, found in Cavia cutleri (Guinea pig).